Here is a 657-residue protein sequence, read N- to C-terminus: Probable cobalt/nickel-exporting P-type ATPase (657 aa).

Helical transmembrane passes span 40-60 (WATV…NGAP), 62-82 (AMWW…SAWA), 101-121 (AAVG…IVIF), 268-288 (LGMV…GADL), and 299-319 (MIVA…LSAI). Catalysis depends on Asp-347, which acts as the 4-aspartylphosphate intermediate. Mg(2+)-binding residues include Asp-543 and Asp-547. Residues 596-618 (VVTVNLAIAATFIAVLVLWDLFG) traverse the membrane as a helical segment.

It belongs to the cation transport ATPase (P-type) (TC 3.A.3) family. Type IB subfamily.

The protein resides in the cell membrane. Functionally, involved in heavy metal homeostasis. Probably exports nickel and cobalt ions out of the cell. The polypeptide is Probable cobalt/nickel-exporting P-type ATPase (ctpD) (Mycobacterium bovis (strain ATCC BAA-935 / AF2122/97)).